Consider the following 607-residue polypeptide: DNA mismatch repair protein MutL (607 aa).

It belongs to the DNA mismatch repair MutL/HexB family.

Its function is as follows. This protein is involved in the repair of mismatches in DNA. It is required for dam-dependent methyl-directed DNA mismatch repair. May act as a 'molecular matchmaker', a protein that promotes the formation of a stable complex between two or more DNA-binding proteins in an ATP-dependent manner without itself being part of a final effector complex. The polypeptide is DNA mismatch repair protein MutL (Anaeromyxobacter sp. (strain K)).